A 354-amino-acid polypeptide reads, in one-letter code: Tetraacyldisaccharide 4'-kinase (354 aa).

Position 53 to 60 (53 to 60) interacts with ATP; sequence AWGGTGKT.

The protein belongs to the LpxK family.

It catalyses the reaction a lipid A disaccharide + ATP = a lipid IVA + ADP + H(+). Its pathway is glycolipid biosynthesis; lipid IV(A) biosynthesis; lipid IV(A) from (3R)-3-hydroxytetradecanoyl-[acyl-carrier-protein] and UDP-N-acetyl-alpha-D-glucosamine: step 6/6. Transfers the gamma-phosphate of ATP to the 4'-position of a tetraacyldisaccharide 1-phosphate intermediate (termed DS-1-P) to form tetraacyldisaccharide 1,4'-bis-phosphate (lipid IVA). The polypeptide is Tetraacyldisaccharide 4'-kinase (Nitratidesulfovibrio vulgaris (strain ATCC 29579 / DSM 644 / CCUG 34227 / NCIMB 8303 / VKM B-1760 / Hildenborough) (Desulfovibrio vulgaris)).